A 365-amino-acid chain; its full sequence is Holliday junction branch migration complex subunit RuvB (365 aa).

Over residues 1–10 (MAIVSSNAAS) the composition is skewed to polar residues. The segment at 1 to 48 (MAIVSSNAASQRPRPDRGPDRVPNRVVDGARQAEDDRDPGRVGAKEDS) is disordered. Composition is skewed to basic and acidic residues over residues 13-23 (PRPDRGPDRVP) and 31-48 (RQAEDDRDPGRVGAKEDS). A large ATPase domain (RuvB-L) region spans residues 13–210 (PRPDRGPDRV…FGLIQRLEFY (198 aa)). Residues Leu49, Arg50, Gly91, Lys94, Thr95, Thr96, Arg200, Tyr210, and Arg247 each coordinate ATP. A Mg(2+)-binding site is contributed by Thr95. Residues 211-282 (GLEDLQAIVE…LVDEALTLHR (72 aa)) are small ATPAse domain (RuvB-S). Residues 285–365 (GRGLDASDRR…GWPYPQEQAA (81 aa)) form a head domain (RuvB-H) region. 2 residues coordinate DNA: Arg340 and Arg345.

Belongs to the RuvB family. Homohexamer. Forms an RuvA(8)-RuvB(12)-Holliday junction (HJ) complex. HJ DNA is sandwiched between 2 RuvA tetramers; dsDNA enters through RuvA and exits via RuvB. An RuvB hexamer assembles on each DNA strand where it exits the tetramer. Each RuvB hexamer is contacted by two RuvA subunits (via domain III) on 2 adjacent RuvB subunits; this complex drives branch migration. In the full resolvosome a probable DNA-RuvA(4)-RuvB(12)-RuvC(2) complex forms which resolves the HJ.

The protein resides in the cytoplasm. The enzyme catalyses ATP + H2O = ADP + phosphate + H(+). Functionally, the RuvA-RuvB-RuvC complex processes Holliday junction (HJ) DNA during genetic recombination and DNA repair, while the RuvA-RuvB complex plays an important role in the rescue of blocked DNA replication forks via replication fork reversal (RFR). RuvA specifically binds to HJ cruciform DNA, conferring on it an open structure. The RuvB hexamer acts as an ATP-dependent pump, pulling dsDNA into and through the RuvAB complex. RuvB forms 2 homohexamers on either side of HJ DNA bound by 1 or 2 RuvA tetramers; 4 subunits per hexamer contact DNA at a time. Coordinated motions by a converter formed by DNA-disengaged RuvB subunits stimulates ATP hydrolysis and nucleotide exchange. Immobilization of the converter enables RuvB to convert the ATP-contained energy into a lever motion, pulling 2 nucleotides of DNA out of the RuvA tetramer per ATP hydrolyzed, thus driving DNA branch migration. The RuvB motors rotate together with the DNA substrate, which together with the progressing nucleotide cycle form the mechanistic basis for DNA recombination by continuous HJ branch migration. Branch migration allows RuvC to scan DNA until it finds its consensus sequence, where it cleaves and resolves cruciform DNA. The protein is Holliday junction branch migration complex subunit RuvB of Synechococcus sp. (strain WH7803).